The following is a 126-amino-acid chain: Hydrogenase maturation factor HypA (126 aa).

Histidine 2 contacts Ni(2+). Zn(2+) is bound by residues cysteine 78, cysteine 81, cysteine 97, and cysteine 100.

Belongs to the HypA/HybF family.

In terms of biological role, involved in the maturation of [NiFe] hydrogenases. Required for nickel insertion into the metal center of the hydrogenase. This Methanococcus maripaludis (strain DSM 14266 / JCM 13030 / NBRC 101832 / S2 / LL) protein is Hydrogenase maturation factor HypA.